Here is a 521-residue protein sequence, read N- to C-terminus: NADH-quinone oxidoreductase subunit N (521 aa).

14 helical membrane passes run 15 to 35, 43 to 63, 98 to 118, 128 to 148, 150 to 170, 185 to 205, 227 to 247, 261 to 281, 303 to 323, 331 to 351, 363 to 383, 406 to 426, 442 to 462, and 485 to 505; these read LAPE…DLIL, IIGW…IWRM, LLKI…LGST, AEFY…ASSG, LVTL…LVGL, VVTG…LYGV, ALVY…IAAA, PTPV…AAVF, VFFA…VSAL, LLAL…AISV, VFYL…VTVI, AAAM…AGFF, WLVA…FGII, and TVIW…GPLM.

Belongs to the complex I subunit 2 family. In terms of assembly, NDH-1 is composed of 14 different subunits. Subunits NuoA, H, J, K, L, M, N constitute the membrane sector of the complex.

It is found in the cell membrane. The enzyme catalyses a quinone + NADH + 5 H(+)(in) = a quinol + NAD(+) + 4 H(+)(out). Its function is as follows. NDH-1 shuttles electrons from NADH, via FMN and iron-sulfur (Fe-S) centers, to quinones in the respiratory chain. The immediate electron acceptor for the enzyme in this species is believed to be a menaquinone. Couples the redox reaction to proton translocation (for every two electrons transferred, four hydrogen ions are translocated across the cytoplasmic membrane), and thus conserves the redox energy in a proton gradient. The polypeptide is NADH-quinone oxidoreductase subunit N (Paenibacillus sp. (strain JDR-2)).